Consider the following 339-residue polypeptide: DNA-directed RNA polymerase subunit alpha (339 aa).

The tract at residues 1 to 233 (MVREEVAGST…DLFLPFLHAE (233 aa)) is alpha N-terminal domain (alpha-NTD). The tract at residues 264-339 (KKGIPLNCIF…IDLLKNKLSF (76 aa)) is alpha C-terminal domain (alpha-CTD).

Belongs to the RNA polymerase alpha chain family. In plastids the minimal PEP RNA polymerase catalytic core is composed of four subunits: alpha, beta, beta', and beta''. When a (nuclear-encoded) sigma factor is associated with the core the holoenzyme is formed, which can initiate transcription.

The protein resides in the plastid. Its subcellular location is the chloroplast. The enzyme catalyses RNA(n) + a ribonucleoside 5'-triphosphate = RNA(n+1) + diphosphate. In terms of biological role, DNA-dependent RNA polymerase catalyzes the transcription of DNA into RNA using the four ribonucleoside triphosphates as substrates. The sequence is that of DNA-directed RNA polymerase subunit alpha from Elymus hystrix (Eastern bottlebrush grass).